The chain runs to 148 residues: Large ribosomal subunit protein bL9 (148 aa).

It belongs to the bacterial ribosomal protein bL9 family.

Its function is as follows. Binds to the 23S rRNA. In Pseudomonas putida (strain W619), this protein is Large ribosomal subunit protein bL9.